We begin with the raw amino-acid sequence, 229 residues long: Flavin-dependent thymidylate synthase (229 aa).

The 217-residue stretch at 1–217 (MEFKVLDKGF…PWTFESFLKF (217 aa)) folds into the ThyX domain. Residues T55, 78–80 (RHR), and E86 contribute to the FAD site. DUMP-binding positions include 75–78 (QWFR), 86–90 (EASLR), and R156. Residues 78 to 88 (RHRIGSFNEAS) carry the ThyX motif motif. FAD-binding positions include 172–174 (NAR) and N178. R183 is a binding site for dUMP. The active-site Involved in ionization of N3 of dUMP, leading to its activation is R183.

It belongs to the thymidylate synthase ThyX family. As to quaternary structure, homotetramer. It depends on FAD as a cofactor.

It catalyses the reaction dUMP + (6R)-5,10-methylene-5,6,7,8-tetrahydrofolate + NADPH + H(+) = dTMP + (6S)-5,6,7,8-tetrahydrofolate + NADP(+). Its pathway is pyrimidine metabolism; dTTP biosynthesis. Functionally, catalyzes the reductive methylation of 2'-deoxyuridine-5'-monophosphate (dUMP) to 2'-deoxythymidine-5'-monophosphate (dTMP) while utilizing 5,10-methylenetetrahydrofolate (mTHF) as the methyl donor, and NADPH and FADH(2) as the reductant. The protein is Flavin-dependent thymidylate synthase of Thermosipho melanesiensis (strain DSM 12029 / CIP 104789 / BI429).